The primary structure comprises 163 residues: Glutathione peroxidase-like peroxiredoxin HYR1 (163 aa).

Residue cysteine 36 is the Cysteine sulfenic acid (-SOH) intermediate of the active site. Cysteines 36 and 82 form a disulfide.

The protein belongs to the glutathione peroxidase family. Interacts with YAP1 and probably YBP1.

The protein resides in the cytoplasm. It localises to the mitochondrion intermembrane space. The protein localises to the peroxisome matrix. It carries out the reaction a hydroperoxide + [thioredoxin]-dithiol = an alcohol + [thioredoxin]-disulfide + H2O. Functionally, involved in oxidative stress response and redox homeostasis. Functions as a sensor and transducer of hydroperoxide stress. In response to hydroperoxide stress it oxidizes (activates) the transcription activator YAP1, which is involved in transcription activation of genes of the oxidative stress response pathway. May also play a direct role in hydroperoxide scavenging, being the most active of three closely related S.cerevisiae peroxiredoxins (GPX1, GPX2, and HYR1/GPX3) with respect to peroxide and lipid hydroperoxide reduction. The three enzymes are not required for the glutaredoxin-mediated antioxidant function. In the presence of peroxides, HYR1/GPX3 is directly oxidized at Cys-36 to form a cysteine sulfenic acid (-SOH). Cys-36-SOH then forms either an intramolecular disulfide bond (Cys-36 with Cys-82) or a transient, intermolecular disulfide bond with 'Cys-598' of YAP1, which is further resolved into a YAP1 intramolecular disulfide bond ('Cys-303' with 'Cys-598'), which causes its nuclear accumulation and activation, and a reduced Cys-36 in HYR1/GPX3. The sequence is that of Glutathione peroxidase-like peroxiredoxin HYR1 from Saccharomyces cerevisiae (strain ATCC 204508 / S288c) (Baker's yeast).